A 498-amino-acid polypeptide reads, in one-letter code: MSVKFEISFAKTVRLNGGLAILLKDADSESPAGAAGADPANVFAKAARIARFTAKGLSSLDIVAPEGSPVDRIIVIGTGRAKELNAHDWLKLGGAAAARIRNVEKAAIFIDLPGVQAGGKAAADFALGMLLRAYSFDTYKTKKGDDDDKNGAQKPVKVTIVTPDVAAAKKLFAASEAIADGVILARDLVNEPPNVLGPVEFAAKAKALEKLGVEVEILTEREMRRLGMGALLGVAQGSVRPPRLVIMQWKGGKAKEKPVAFIGKGVVFDTGGISIKPAAGMEDMKGDMGGAAAVTGLMHTLAARGAKVNAIGVIGLVENMPDGNAQRPGDIVTSMSGQTIEIINTDAEGRLVLCDALWYTNDRFKPQFMINLATLTGAILVALGNLQAGLFSNDDQLANQLTAAGLVTNERLWRMPLGKDYDKMIDSKFADMKNTGGRYAGSITAAQFLKRFVQETPWAHLDIAGTAMGSTLDEINQSWGSGFGVRLLDELVRENYES.

2 residues coordinate Mn(2+): Lys264 and Asp269. Lys276 is a catalytic residue. The Mn(2+) site is built by Asp287, Asp346, and Glu348. Residue Arg350 is part of the active site.

This sequence belongs to the peptidase M17 family. Mn(2+) serves as cofactor.

The protein localises to the cytoplasm. It catalyses the reaction Release of an N-terminal amino acid, Xaa-|-Yaa-, in which Xaa is preferably Leu, but may be other amino acids including Pro although not Arg or Lys, and Yaa may be Pro. Amino acid amides and methyl esters are also readily hydrolyzed, but rates on arylamides are exceedingly low.. It carries out the reaction Release of an N-terminal amino acid, preferentially leucine, but not glutamic or aspartic acids.. In terms of biological role, presumably involved in the processing and regular turnover of intracellular proteins. Catalyzes the removal of unsubstituted N-terminal amino acids from various peptides. The polypeptide is Probable cytosol aminopeptidase (Rhizobium rhizogenes (strain K84 / ATCC BAA-868) (Agrobacterium radiobacter)).